The chain runs to 259 residues: UPF0246 protein NMA1114 (259 aa).

The protein belongs to the UPF0246 family.

The sequence is that of UPF0246 protein NMA1114 from Neisseria meningitidis serogroup A / serotype 4A (strain DSM 15465 / Z2491).